A 64-amino-acid polypeptide reads, in one-letter code: Protein sigN173 (64 aa).

The chain is Protein sigN173 from Dictyostelium discoideum (Social amoeba).